The primary structure comprises 90 residues: MKKTVHLRITGHVQGVGLRYSVYQKATSLGITGYAENLYDGSVEVVAEGDEESIKELIHFIKTGLRWARVDNVEERWLEYKGQYKDFRIY.

Residues 4–90 (TVHLRITGHV…KGQYKDFRIY (87 aa)) form the Acylphosphatase-like domain. Residues R19 and N37 contribute to the active site.

This sequence belongs to the acylphosphatase family.

It catalyses the reaction an acyl phosphate + H2O = a carboxylate + phosphate + H(+). The chain is Acylphosphatase (acyP) from Caldanaerobacter subterraneus subsp. tengcongensis (strain DSM 15242 / JCM 11007 / NBRC 100824 / MB4) (Thermoanaerobacter tengcongensis).